Here is a 479-residue protein sequence, read N- to C-terminus: GTPase Der (479 aa).

EngA-type G domains follow at residues phenylalanine 3–alanine 167 and leucine 191–asparagine 366. GTP is bound by residues glycine 9–serine 16, aspartate 56–leucine 60, asparagine 119–glutamate 122, glycine 197–serine 204, aspartate 244–methionine 248, and asparagine 309–aspartate 312. The region spanning threonine 367–aspartate 453 is the KH-like domain. A disordered region spans residues serine 449–glycine 479. Over residues lysine 457–arginine 472 the composition is skewed to basic residues.

This sequence belongs to the TRAFAC class TrmE-Era-EngA-EngB-Septin-like GTPase superfamily. EngA (Der) GTPase family. Associates with the 50S ribosomal subunit.

Its function is as follows. GTPase that plays an essential role in the late steps of ribosome biogenesis. In Jannaschia sp. (strain CCS1), this protein is GTPase Der.